The sequence spans 122 residues: MAVTARNQRVAEEMKKEIARIIRDEVKDPRLEAGLVSVTGVELSNDRHYAKVYVSIYGDEEARNQAMEGLARATSFIRREIGQRLSLRYTPEITFKLDVSIEHGDHINRLLARVRAGEYADE.

This sequence belongs to the RbfA family. In terms of assembly, monomer. Binds 30S ribosomal subunits, but not 50S ribosomal subunits or 70S ribosomes.

It localises to the cytoplasm. Its function is as follows. One of several proteins that assist in the late maturation steps of the functional core of the 30S ribosomal subunit. Associates with free 30S ribosomal subunits (but not with 30S subunits that are part of 70S ribosomes or polysomes). Required for efficient processing of 16S rRNA. May interact with the 5'-terminal helix region of 16S rRNA. The polypeptide is Ribosome-binding factor A (Moorella thermoacetica (strain ATCC 39073 / JCM 9320)).